The primary structure comprises 77 residues: MKNYSKNATYLITVLLFSFVTMLLIIPSKCEAVSNDMQPLEARTADLVQQPRYIIDVPPRCPPGSKFVHKRCRVIVP.

Residues 1–32 (MKNYSKNATYLITVLLFSFVTMLLIIPSKCEA) form the signal peptide. Residues 33–52 (VSNDMQPLEARTADLVQQPR) constitute a propeptide that is removed on maturation. Cysteine 61 and cysteine 72 are joined by a disulfide. Proline 77 carries the post-translational modification Proline amide.

The protein belongs to the secapin family. Expressed by the venom gland.

The protein localises to the secreted. Functionally, serine protease inhibitor which exhibits antifibrinolytic, antielastolytic and antimicrobial activities. Displays antimicrobial activity against bacteria and fungi. Likely functions in the innate immune response to microbial infection and possibly in the venom, as an antifibrinolytic agent. Induces hyperalgesia and edema mediated by leukotrienes when injected into mice. Does not induce hemolytic activity, mast cell degranulation, or chemotactic activity for polymorphonucleated leukocytes (PMNL). The protein is Secapin-2 of Apis mellifera (Honeybee).